Here is a 268-residue protein sequence, read N- to C-terminus: Embryonic abundant protein USP87 (268 aa).

The signal sequence occupies residues 1–22 (MEFAHLTVLSLFCLAFVGITAT). Tandem repeats lie at residues 50-55 (GKTNSL), 83-88 (GNTNSV), 101-106 (GVTDSI), 166-183 (YVVE…MCHR), and 202-222 (YVVS…VCHH). The interval 50–106 (GKTNSLPIKSEELKQYSTLFFEHDLHPRKNFILGNTNSVGSIIRPFTKSRQGVTDSI) is 3 X 6 AA approximate repeats. Residues 68 to 259 (LFFEHDLHPR…GNKAAAWVPN (192 aa)) enclose the BURP domain. Positions 166 to 222 (YVVEDVKKVGDNAVMCHRLNFEKVVFNCHQVRDTTAYVVSLVASDGTKTKALTVCHH) are 2 X approximate repeats. Asn-259 carries N-linked (GlcNAc...) asparagine glycosylation.

As to expression, seed.

This Vicia faba (Broad bean) protein is Embryonic abundant protein USP87.